Consider the following 354-residue polypeptide: D-alanine--D-alanine ligase (354 aa).

The 211-residue stretch at Lys-132 to Gln-342 folds into the ATP-grasp domain. Glu-168 to Val-223 is a binding site for ATP. Positions 295, 309, and 311 each coordinate Mg(2+).

It belongs to the D-alanine--D-alanine ligase family. Mg(2+) serves as cofactor. The cofactor is Mn(2+).

It localises to the cytoplasm. The catalysed reaction is 2 D-alanine + ATP = D-alanyl-D-alanine + ADP + phosphate + H(+). The protein operates within cell wall biogenesis; peptidoglycan biosynthesis. Functionally, cell wall formation. The polypeptide is D-alanine--D-alanine ligase (Synechocystis sp. (strain ATCC 27184 / PCC 6803 / Kazusa)).